Consider the following 249-residue polypeptide: tRNA pseudouridine synthase A (249 aa).

Aspartate 54 serves as the catalytic Nucleophile. Tyrosine 111 is a substrate binding site.

Belongs to the tRNA pseudouridine synthase TruA family. Homodimer.

It carries out the reaction uridine(38/39/40) in tRNA = pseudouridine(38/39/40) in tRNA. In terms of biological role, formation of pseudouridine at positions 38, 39 and 40 in the anticodon stem and loop of transfer RNAs. This Mycoplasma capricolum subsp. capricolum (strain California kid / ATCC 27343 / NCTC 10154) protein is tRNA pseudouridine synthase A.